Reading from the N-terminus, the 153-residue chain is Transthyretin (153 aa).

Positions 1–19 (MASFKSFLLLALLAIVSEA) are cleaved as a signal peptide. C34 is modified (sulfocysteine). Residues K39 and E78 each coordinate L-thyroxine. An N-linked (GlcNAc...) asparagine glycan is attached at N81. S141 lines the L-thyroxine pocket.

The protein belongs to the transthyretin family. In terms of assembly, homotetramer. Dimer of dimers. In the homotetramer, subunits assemble around a central channel that can accommodate two ligand molecules. Interacts with rbp4. Sulfonation of the reactive cysteine Cys-34 enhances the stability of the native conformation of TTR, avoiding misassembly of the protein leading to amyloid formation. Detected in plasma (at protein level). Expressed during metamorphosis in tadpole liver, but not in tadpole brain nor adult liver. Between 1.5 and 3 days of development, also expressed in the mesoderm of the kidney.

Its subcellular location is the secreted. Thyroid hormone-binding protein, with a much higher binding affinity for triiodothyronine (T3) than for thyroxine (T4). Probably transports triiodothyronine from the bloodstream to the brain. The protein is Transthyretin (ttr) of Xenopus laevis (African clawed frog).